We begin with the raw amino-acid sequence, 62 residues long: Conotoxin TeAr151 (62 aa).

The first 22 residues, 1–22 (MRCLPVFVVLLLLIASAPSVDA), serve as a signal peptide directing secretion. Positions 23 to 47 (QPKTKDDVPLAPLHDNIQNTLQTLR) are excised as a propeptide. The residue at position 55 (Met55) is a Methionine sulfoxide; partial. Ser60 is subject to Serine amide.

The protein belongs to the conotoxin T superfamily. Contains 2 disulfide bonds. Post-translationally, contains 2 disulfide bonds that can be either 'C1-C3, C2-C4' or 'C1-C4, C2-C3', since these disulfide connectivities have been observed for conotoxins with cysteine framework V (for examples, see AC P0DQQ7 and AC P81755).. Expressed by the venom duct. Is mostly present in part 5 of the venom duct (distal part near the pharynx), and less abundantly present in part 4 of the venom duct.

Its subcellular location is the secreted. The sequence is that of Conotoxin TeAr151 from Conus textile (Cloth-of-gold cone).